The primary structure comprises 60 residues: Large ribosomal subunit protein bL32 (60 aa).

Basic residues predominate over residues 1–16 (MAVPKRKTTPSKRGMR). The segment at 1-60 (MAVPKRKTTPSKRGMRRSADALKQPAYVENPDSGELHRPHHVDLKSGMYRGKQILKPKGE) is disordered. A compositionally biased stretch (basic and acidic residues) spans 34–44 (GELHRPHHVDL).

The protein belongs to the bacterial ribosomal protein bL32 family.

In Parvibaculum lavamentivorans (strain DS-1 / DSM 13023 / NCIMB 13966), this protein is Large ribosomal subunit protein bL32.